The sequence spans 118 residues: Beta-2-microglobulin (118 aa).

A signal peptide spans methionine 1–alanine 20. One can recognise an Ig-like C1-type domain in the interval proline 25–lysine 113. A disulfide bridge links cysteine 45 with cysteine 99.

It belongs to the beta-2-microglobulin family. Heterodimer of an alpha chain and a beta chain. Beta-2-microglobulin is the beta-chain of major histocompatibility complex class I molecules.

The protein localises to the secreted. Component of the class I major histocompatibility complex (MHC). Involved in the presentation of peptide antigens to the immune system. This is Beta-2-microglobulin (B2M) from Felis catus (Cat).